Here is a 1243-residue protein sequence, read N- to C-terminus: Serine/threonine-protein kinase/endoribonuclease IRE1 (1243 aa).

Residues 1–35 (MMRRPPSQGRWSASHQKLLLAFAFILIPWLQLADA) form the signal peptide. The Lumenal segment spans residues 36 to 585 (QQQPQQPQIR…VKALPQSAAN (550 aa)). Disordered regions lie at residues 70-132 (HAAP…KPNY) and 149-172 (QPVRAPHTSRHHWPSSSAASGLAS). The span at 73–85 (PDVHPEAKFDTVN) shows a compositional bias: basic and acidic residues. Over residues 90–99 (QQSTASPQQH) the composition is skewed to polar residues. Residues 163-172 (SSSAASGLAS) show a composition bias toward low complexity. Asn226, Asn470, and Asn554 each carry an N-linked (GlcNAc...) asparagine glycan. Residues 586 to 606 (SVIDFVSNPILIIFLIGSLIY) traverse the membrane as a helical segment. Topologically, residues 607–1243 (NEKKLRRSYH…FREYYEPAGL (637 aa)) are cytoplasmic. Residues 638 to 765 (GDESGDDKDG…QSHENDPALT (128 aa)) are disordered. Residues 650–660 (PSSPSPRSQPQ) are compositionally biased toward low complexity. Residues 674–693 (ERNAGDQDKVKDNRSLHDVS) are compositionally biased toward basic and acidic residues. Residues 732-749 (KKKKAHRGRRGGVKHRKG) show a composition bias toward basic residues. The 297-residue stretch at 809 to 1105 (VDTDVELGMG…SREVMAHPFF (297 aa)) folds into the Protein kinase domain. Residues 815–823 (LGMGSNGTV) and Lys837 each bind ATP. Residues Ser819, Lys837, Glu881, and Cys883 each contribute to the ADP site. Asp931 serves as the catalytic Proton acceptor. Residues Asn936 and Asp953 each contribute to the Mg(2+) site. A KEN domain is found at 1108-1240 (PKKRLAFLCD…TDRFREYYEP (133 aa)).

It belongs to the protein kinase superfamily. Ser/Thr protein kinase family. Mg(2+) serves as cofactor. Autophosphorylated mainly on serine residues; phosphorylation enables nucleotide binding by the active site.

It localises to the endoplasmic reticulum membrane. The catalysed reaction is L-seryl-[protein] + ATP = O-phospho-L-seryl-[protein] + ADP + H(+). The enzyme catalyses L-threonyl-[protein] + ATP = O-phospho-L-threonyl-[protein] + ADP + H(+). Senses unfolded proteins in the lumen of the endoplasmic reticulum via its N-terminal domain which leads to enzyme auto-activation. The active endoribonuclease domain splices precursor mRNAs to produce their mature form which then induces transcription of UPR target genes. This chain is Serine/threonine-protein kinase/endoribonuclease IRE1, found in Hypocrea jecorina (strain QM6a) (Trichoderma reesei).